The primary structure comprises 186 residues: NADH-ubiquinone oxidoreductase 17.8 kDa subunit, mitochondrial (186 aa).

The N-terminal 26 residues, 1–26 (MSSFRLGVSRVARQVRAPCVRNTRRY), are a transit peptide targeting the mitochondrion. Residues 22 to 49 (NTRRYASDSHAPADHTHSAAGHGEHHHA) form a disordered region. Residues 26 to 49 (YASDSHAPADHTHSAAGHGEHHHA) are compositionally biased toward basic and acidic residues. A helical transmembrane segment spans residues 58–78 (LGTAFYVIFGAIPAFGALYYF).

As to quaternary structure, complex I is composed of about 40 different subunits.

It is found in the mitochondrion inner membrane. The catalysed reaction is a ubiquinone + NADH + 5 H(+)(in) = a ubiquinol + NAD(+) + 4 H(+)(out). Its function is as follows. Transfer of electrons from NADH to the respiratory chain. The immediate electron acceptor for the enzyme is believed to be ubiquinone. The sequence is that of NADH-ubiquinone oxidoreductase 17.8 kDa subunit, mitochondrial (nuo17.8) from Neurospora crassa (strain ATCC 24698 / 74-OR23-1A / CBS 708.71 / DSM 1257 / FGSC 987).